Here is a 506-residue protein sequence, read N- to C-terminus: (+)-piperitol/(+)-sesamin synthase CYP81Q2 (506 aa).

A helical membrane pass occupies residues 3-23 (AEMLYSALALTFAIFMVYRIL). Cys-439 provides a ligand contact to heme.

It belongs to the cytochrome P450 family. The cofactor is heme. In terms of tissue distribution, expressed in seeds.

The protein resides in the membrane. The catalysed reaction is (+)-piperitol + reduced [NADPH--hemoprotein reductase] + O2 = (+)-sesamin + oxidized [NADPH--hemoprotein reductase] + 2 H2O + H(+). The enzyme catalyses (+)-pinoresinol + reduced [NADPH--hemoprotein reductase] + O2 = (+)-piperitol + oxidized [NADPH--hemoprotein reductase] + 2 H2O + H(+). In terms of biological role, involved in the biosynthesis of (+)-sesamin, a furofuran class lignan. Functions in a dual catalytic mode. Catalyzes the synthesis of (+)-sesamin from (+)- pinoresinol by formation of two successive methylenedioxy bridges on (+)-pinoresinol and (+)-piperitol, respectively. In Sesamum radiatum (Black benniseed), this protein is (+)-piperitol/(+)-sesamin synthase CYP81Q2.